Consider the following 274-residue polypeptide: 2,3,4,5-tetrahydropyridine-2,6-dicarboxylate N-succinyltransferase (274 aa).

Residues R104 and D141 each coordinate substrate.

This sequence belongs to the transferase hexapeptide repeat family. As to quaternary structure, homotrimer.

It is found in the cytoplasm. It carries out the reaction (S)-2,3,4,5-tetrahydrodipicolinate + succinyl-CoA + H2O = (S)-2-succinylamino-6-oxoheptanedioate + CoA. It functions in the pathway amino-acid biosynthesis; L-lysine biosynthesis via DAP pathway; LL-2,6-diaminopimelate from (S)-tetrahydrodipicolinate (succinylase route): step 1/3. The protein is 2,3,4,5-tetrahydropyridine-2,6-dicarboxylate N-succinyltransferase of Shewanella halifaxensis (strain HAW-EB4).